A 339-amino-acid chain; its full sequence is Heat-inducible transcription repressor HrcA (339 aa).

Belongs to the HrcA family.

Its function is as follows. Negative regulator of class I heat shock genes (grpE-dnaK-dnaJ and groELS operons). Prevents heat-shock induction of these operons. This Clostridium perfringens (strain 13 / Type A) protein is Heat-inducible transcription repressor HrcA.